Consider the following 856-residue polypeptide: V-type proton ATPase 116 kDa subunit a 2 (856 aa).

Residues 1-393 are Cytoplasmic-facing; it reads MGSLFRSETM…DAYGVGSYRE (393 aa). A helical membrane pass occupies residues 394 to 412; sequence VNPALFTIITFPFLFAVMF. At 413-414 the chain is on the vacuolar side; that stretch reads GD. A helical membrane pass occupies residues 415–431; sequence FGHGFVMFLFALLLVLN. The Cytoplasmic segment spans residues 432 to 445; it reads ENHPRLNQSQEIMR. Residues 446-475 form a helical membrane-spanning segment; it reads MFFNGRYILLLMGLFSVYTGLIYNDCFSKS. Residues 476-549 are Vacuolar-facing; that stretch reads VNLFGSGWNV…ATNRLTFLNS (74 aa). N-linked (GlcNAc...) asparagine glycans are attached at residues N484 and N505. The chain crosses the membrane as a helical span at residues 550-569; that stretch reads FKMKMSVILGIIHMTFGVIL. Over 570–587 the chain is Cytoplasmic; that stretch reads GIFNHLHFRKKFNIYLVS. A helical membrane pass occupies residues 588-608; sequence IPELLFMLCIFGYLIFMIFYK. Topologically, residues 609–651 are vacuolar; that stretch reads WLVFSAETSRVAPSILIEFINMFLFPASKTSGLYTGQEYVQRV. The chain crosses the membrane as a helical span at residues 652–671; the sequence is LLVVTALSVPVLFLGKPLFL. Over 672-739 the chain is Cytoplasmic; sequence LWLHNGRSCF…EILMTQVIHS (68 aa). Phosphoserine is present on residues S695 and S700. A helical transmembrane segment spans residues 740–764; that stretch reads IEYCLGCISNTASYLRLWALSLAHA. Residues 765–785 are Vacuolar-facing; that stretch reads QLSDVLWAMLMRVGLRVDTTY. Residues 786–824 traverse the membrane as a helical segment; the sequence is GVLLLLPVIALFAVLTIFILLIMEGLSAFLHAIRLHWVE. Topologically, residues 825–856 are cytoplasmic; sequence FQNKFYVGAGTKFVPFSFSLLSSKFNNDDSVA.

This sequence belongs to the V-ATPase 116 kDa subunit family. As to quaternary structure, V-ATPase is a heteromultimeric enzyme made up of two complexes: the ATP-hydrolytic V1 complex and the proton translocation V0 complex. The V1 complex consists of three catalytic AB heterodimers that form a heterohexamer, three peripheral stalks each consisting of EG heterodimers, one central rotor including subunits D and F, and the regulatory subunits C and H. The proton translocation complex V0 consists of the proton transport subunit a, a ring of proteolipid subunits c9c'', rotary subunit d, subunits e and f, and the accessory subunits ATP6AP1/Ac45 and ATP6AP2/PRR. Directly interacts with PSCD2 through its N-terminal cytosolic tail in an intra-endosomal acidification-dependent manner. Disruption of this interaction results in the inhibition of endocytosis. Interacts with SPAAR.

It is found in the cell membrane. The protein localises to the endosome membrane. Functionally, subunit of the V0 complex of vacuolar(H+)-ATPase (V-ATPase), a multisubunit enzyme composed of a peripheral complex (V1) that hydrolyzes ATP and a membrane integral complex (V0) that translocates protons. V-ATPase is responsible for acidifying and maintaining the pH of intracellular compartments and in some cell types, is targeted to the plasma membrane, where it is responsible for acidifying the extracellular environment. Essential component of the endosomal pH-sensing machinery. May play a role in maintaining the Golgi functions, such as glycosylation maturation, by controlling the Golgi pH. In aerobic conditions, involved in intracellular iron homeostasis, thus triggering the activity of Fe(2+) prolyl hydroxylase (PHD) enzymes, and leading to HIF1A hydroxylation and subsequent proteasomal degradation. This is V-type proton ATPase 116 kDa subunit a 2 (ATP6V0A2) from Homo sapiens (Human).